The sequence spans 512 residues: Multidrug resistance protein 3 (512 aa).

The next 14 helical transmembrane spans lie at 13–33 (FVVL…TIVA), 48–68 (KFAW…PIYG), 79–99 (FFLF…IAQT), 109–129 (IQGI…FDLF), 139–159 (GMFG…GAII), 163–183 (ISWH…LFFI), 200–220 (WGGA…LELG), 228–248 (SIQI…FFIV), 272–292 (ILAF…PIFV), 304–324 (GFIL…GGIF), 333–353 (LMLI…NMTP), 358–378 (VWLT…FSLL), 399–421 (SFLR…TNVF), and 475–495 (ITYV…TILF).

This sequence belongs to the major facilitator superfamily. EmrB family.

The protein localises to the cell membrane. Its function is as follows. Confers resistance to puromycin, tosufloxacin and norfloxacin. This is Multidrug resistance protein 3 (bmr3) from Bacillus subtilis (strain 168).